Here is a 472-residue protein sequence, read N- to C-terminus: Sad1-interacting factor 3 (472 aa).

2 disordered regions span residues 1–47 and 197–223; these read MSTK…PRFG and SSGP…DKPD. At 1–443 the chain is on the lumenal side; sequence MSTKDKLNLP…KSSADRKMNS (443 aa). Residues 30-40 are compositionally biased toward polar residues; it reads NSESTRITPQH. Phosphoserine is present on Ser-42. A helical transmembrane segment spans residues 444–464; sequence ITWIIIILISLFVIIFTLEVI. Topologically, residues 465 to 472 are cytoplasmic; that stretch reads LRLRWAHR.

This sequence belongs to the RMD1/sif2 family. In terms of assembly, interacts with sad1.

It is found in the nucleus membrane. The protein is Sad1-interacting factor 3 (sif3) of Schizosaccharomyces pombe (strain 972 / ATCC 24843) (Fission yeast).